The following is a 46-amino-acid chain: Defensin Tk-AMP-D6 (46 aa).

Cystine bridges form between C3/C46, C14/C34, C20/C40, and C24/C42.

Plant defense peptide. This is Defensin Tk-AMP-D6 from Triticum kiharae (Wheat).